The following is a 454-amino-acid chain: Mannosylfructose-phosphate synthase (454 aa).

The protein belongs to the glycosyltransferase 1 family. The cofactor is Mg(2+). Mn(2+) serves as cofactor.

It catalyses the reaction beta-D-fructose 6-phosphate + GDP-alpha-D-mannose = beta-D-fructofuranosyl alpha-D-mannopyranoside 6(F)-phosphate + GDP + H(+). Its pathway is carbohydrate metabolism; mannosylfructose biosynthesis; beta-D-fructofuranosyl alpha-D-mannopyranoside from D-fructose 6-phosphate and GDP-alpha-D-mannose: step 1/2. The chain is Mannosylfructose-phosphate synthase from Agrobacterium fabrum (strain C58 / ATCC 33970) (Agrobacterium tumefaciens (strain C58)).